The primary structure comprises 93 residues: MKTLLLTLVVVTIVCLDLGNSFSCYKTPHVKSEPCAPGQNLCYTKTWCDAFCFSRGRVIELGCAATCPPAEPKKDISCCSTDNCNPHPAHQSR.

An N-terminal signal peptide occupies residues Met1–Ser21. Cystine bridges form between Cys24–Cys42, Cys35–Cys63, Cys48–Cys52, Cys67–Cys78, and Cys79–Cys84.

This sequence belongs to the three-finger toxin family. Long-chain subfamily. Type II alpha-neurotoxin sub-subfamily. Expressed by the venom gland.

Its subcellular location is the secreted. Functionally, binds with high affinity to muscular (alpha-1/CHRNA1) and neuronal (alpha-7/CHRNA7) nicotinic acetylcholine receptor (nAChR) and inhibits acetylcholine from binding to the receptor, thereby impairing neuromuscular and neuronal transmission. The chain is Long neurotoxin 1 from Tropidechis carinatus (Australian rough-scaled snake).